A 186-amino-acid polypeptide reads, in one-letter code: Tumor necrosis factor, alpha-induced protein 8-like protein 2 A (186 aa).

The protein belongs to the TNFAIP8 family. TNFAIP8L2 subfamily.

Its function is as follows. Acts as a negative regulator of innate and adaptive immunity by maintaining immune homeostasis. Negative regulator of Toll-like receptor and T-cell receptor function. Prevents hyperresponsiveness of the immune system and maintains immune homeostasis. Inhibits jun/ap1 and NF-kappa-B activation. Promotes Fas-induced apoptosis. This is Tumor necrosis factor, alpha-induced protein 8-like protein 2 A (tnfaip8l2a) from Danio rerio (Zebrafish).